We begin with the raw amino-acid sequence, 484 residues long: ATP synthase subunit beta (484 aa).

168 to 175 (GGAGVGKT) contributes to the ATP binding site.

The protein belongs to the ATPase alpha/beta chains family. In terms of assembly, F-type ATPases have 2 components, CF(1) - the catalytic core - and CF(0) - the membrane proton channel. CF(1) has five subunits: alpha(3), beta(3), gamma(1), delta(1), epsilon(1). CF(0) has three main subunits: a(1), b(2) and c(9-12). The alpha and beta chains form an alternating ring which encloses part of the gamma chain. CF(1) is attached to CF(0) by a central stalk formed by the gamma and epsilon chains, while a peripheral stalk is formed by the delta and b chains.

Its subcellular location is the cell membrane. The enzyme catalyses ATP + H2O + 4 H(+)(in) = ADP + phosphate + 5 H(+)(out). Functionally, produces ATP from ADP in the presence of a proton gradient across the membrane. The catalytic sites are hosted primarily by the beta subunits. This chain is ATP synthase subunit beta, found in Pseudarthrobacter chlorophenolicus (strain ATCC 700700 / DSM 12829 / CIP 107037 / JCM 12360 / KCTC 9906 / NCIMB 13794 / A6) (Arthrobacter chlorophenolicus).